A 168-amino-acid chain; its full sequence is Large ribosomal subunit protein uL16 (168 aa).

The protein belongs to the universal ribosomal protein uL16 family.

This is Large ribosomal subunit protein uL16 from Thermofilum pendens (strain DSM 2475 / Hrk 5).